The chain runs to 122 residues: Large ribosomal subunit protein uL14 (122 aa).

It belongs to the universal ribosomal protein uL14 family. Part of the 50S ribosomal subunit. Forms a cluster with proteins L3 and L19. In the 70S ribosome, L14 and L19 interact and together make contacts with the 16S rRNA in bridges B5 and B8.

Binds to 23S rRNA. Forms part of two intersubunit bridges in the 70S ribosome. In Shewanella sediminis (strain HAW-EB3), this protein is Large ribosomal subunit protein uL14.